A 302-amino-acid chain; its full sequence is MLVSRVLSRVSRSAGLRSSFSSVVTPKRNQIPIVASRFHSLVHGTPNKLVAVPVSLRNHGTLDLNVLQRFGFFSSSSAEPKGNESNTEVPKTGETSENVEVGKATDAEIDFDDLSRDDLVKLVSEKEDLLKVQQKDIMEMKDKFLRTYAEQQNLMDRTNRNAESAKKFAVQNFATSLLDVADNLERASSVVKESFSKIDTSKDLAGATPLLKNLLEGVEMTEKQLAEVFRKAGLVKEDPLNEPFNPNRHNAVFQVPDASKPKGTIAHVLKSGYSLYDRVIRPAEVGVTCAVENQEGGKESAA.

Residues 1 to 39 (MLVSRVLSRVSRSAGLRSSFSSVVTPKRNQIPIVASRFH) constitute a mitochondrion transit peptide. The tract at residues 77-97 (SAEPKGNESNTEVPKTGETSE) is disordered.

It belongs to the GrpE family. In terms of assembly, probable component of the PAM complex, at least composed of SSC1 (mtHsp70), MGE1, TIM44, PAM16/TIM16, PAM17 and PAM18/TIM14. Interacts with SSQ1.

It is found in the mitochondrion matrix. Essential component of the PAM complex, a complex required for the translocation of transit peptide-containing proteins from the inner membrane into the mitochondrial matrix in an ATP-dependent manner. Seems to control the nucleotide-dependent binding of mitochondrial HSP70 to substrate proteins. Binds ATP. Interacts with copper ions Cu(2+). The protein is GrpE protein homolog 1, mitochondrial of Arabidopsis thaliana (Mouse-ear cress).